The sequence spans 421 residues: Serine--tRNA ligase (421 aa).

225–227 (TAE) is an L-serine binding site. ATP is bound by residues 256–258 (RSE) and Val272. Residue Glu279 coordinates L-serine. 345-348 (ETHS) is an ATP binding site. Thr380 contributes to the L-serine binding site.

It belongs to the class-II aminoacyl-tRNA synthetase family. Type-1 seryl-tRNA synthetase subfamily. As to quaternary structure, homodimer. The tRNA molecule binds across the dimer.

Its subcellular location is the cytoplasm. The enzyme catalyses tRNA(Ser) + L-serine + ATP = L-seryl-tRNA(Ser) + AMP + diphosphate + H(+). It carries out the reaction tRNA(Sec) + L-serine + ATP = L-seryl-tRNA(Sec) + AMP + diphosphate + H(+). The protein operates within aminoacyl-tRNA biosynthesis; selenocysteinyl-tRNA(Sec) biosynthesis; L-seryl-tRNA(Sec) from L-serine and tRNA(Sec): step 1/1. Its function is as follows. Catalyzes the attachment of serine to tRNA(Ser). Is also able to aminoacylate tRNA(Sec) with serine, to form the misacylated tRNA L-seryl-tRNA(Sec), which will be further converted into selenocysteinyl-tRNA(Sec). This chain is Serine--tRNA ligase, found in Thermus thermophilus (strain ATCC 27634 / DSM 579 / HB8).